The primary structure comprises 77 residues: UPF0401 protein ECP_3010 (77 aa).

The protein belongs to the UPF0401 family.

This chain is UPF0401 protein ECP_3010, found in Escherichia coli O6:K15:H31 (strain 536 / UPEC).